Reading from the N-terminus, the 211-residue chain is LexA repressor (211 aa).

Positions 30–50 (RVEIAREIGFKSPNAAEEHLK) form a DNA-binding region, H-T-H motif. Active-site for autocatalytic cleavage activity residues include S128 and K165.

This sequence belongs to the peptidase S24 family. In terms of assembly, homodimer.

It catalyses the reaction Hydrolysis of Ala-|-Gly bond in repressor LexA.. Functionally, represses a number of genes involved in the response to DNA damage (SOS response), including recA and lexA. In the presence of single-stranded DNA, RecA interacts with LexA causing an autocatalytic cleavage which disrupts the DNA-binding part of LexA, leading to derepression of the SOS regulon and eventually DNA repair. This Haemophilus ducreyi (strain 35000HP / ATCC 700724) protein is LexA repressor.